The sequence spans 517 residues: Ribonuclease Y (517 aa).

Residues 1-21 (MIEVVVGIGAGLIGIGAGYLV) form a helical membrane-spanning segment. A KH domain is found at 207 to 273 (LINVVNIKND…TRVIELLVED (67 aa)). The 94-residue stretch at 333-426 (ALAHSLEVAH…VCAADALSAA (94 aa)) folds into the HD domain.

This sequence belongs to the RNase Y family.

It localises to the cell membrane. Its function is as follows. Endoribonuclease that initiates mRNA decay. The polypeptide is Ribonuclease Y (Campylobacter fetus subsp. fetus (strain 82-40)).